The primary structure comprises 358 residues: 4-hydroxy-2-oxovalerate aldolase 2 (358 aa).

A Pyruvate carboxyltransferase domain is found at 16–268 (VLLHDMCLRD…ETGVDLFKLM (253 aa)). A substrate-binding site is contributed by 24–25 (RD). Aspartate 25 serves as a coordination point for Mn(2+). Histidine 28 acts as the Proton acceptor in catalysis. Substrate-binding residues include serine 178 and histidine 207. Positions 207 and 209 each coordinate Mn(2+). Residue tyrosine 298 participates in substrate binding.

It belongs to the 4-hydroxy-2-oxovalerate aldolase family.

It carries out the reaction (S)-4-hydroxy-2-oxopentanoate = acetaldehyde + pyruvate. The protein is 4-hydroxy-2-oxovalerate aldolase 2 of Methylibium petroleiphilum (strain ATCC BAA-1232 / LMG 22953 / PM1).